The primary structure comprises 634 residues: MSDALSTPQVALPAQRPTPFLTLSLGSIGVVYGDIGTSPLYALKESLNAATAGNALTEAMVLGVMSLMLWTLVIIVTLKYVLLIMRADNHGEGGTLTLMALLQHVMHRRFAAISLLGMAGAALFYGDAIITPAISVLSAVEGLKLVAPVFDPYILPLSMAILIGLFVVQFRGTAAVAAWFGPIMLLWFTVMALGGIMNLITDLSVLRAINPLYGVDFLMHHGRAGLLALGAVFLTVTGAEALYADMGHFSRRPIQFAWFAVVFPALALCYLGQGAMLMSHPERLENPFFFLFPEWALLPMVGLATAATIIASQAVISGAYSLTQQAIQLGLLPRMEIRRTSETEKGQIYIPRANWLLLIAVLYLVFAFKSSSALASAYGIAVTGTMVITSVMAYFVMRKCWKWSVATSALIIAPFLTVDLIFLMANMLKIFEGGWIPLVIGGGLMGVMITWRRGTKIVAKKTVRDEVDLGDFIKSISVSSSISRVRGVAVFLTGNPNSTPTSLMHNLKHNKVLHEKNVILRVVTEDVPRVPEAERSSVEVVNDLFSRIELRFGYMESPNVPKALAACADRGFSFDIMSTSFFLSRRVIRPAVPSEMPRWQSLLFANMAKWADDASLYFRIPTGRAVEVGMQINV.

Helical transmembrane passes span 20 to 40, 64 to 84, 110 to 130, 148 to 168, 176 to 196, 224 to 244, 256 to 276, 290 to 310, 348 to 368, 377 to 397, 405 to 425, and 430 to 450; these read FLTL…TSPL, VMSL…VLLI, FAAI…DAII, PVFD…LFVV, VAAW…LGGI, AGLL…ALYA, FAWF…QGAM, FLFP…ATII, IYIP…VFAF, AYGI…YFVM, VATS…FLMA, and IFEG…VMIT.

This sequence belongs to the HAK/KUP transporter (TC 2.A.72) family.

Its subcellular location is the cell inner membrane. It catalyses the reaction K(+)(in) + H(+)(in) = K(+)(out) + H(+)(out). Its function is as follows. Transport of potassium into the cell. Likely operates as a K(+):H(+) symporter. This Rhodopseudomonas palustris (strain BisB5) protein is Probable potassium transport system protein Kup 1.